We begin with the raw amino-acid sequence, 210 residues long: Putative methyltransferase ECU09_1500 (210 aa).

This sequence belongs to the methyltransferase superfamily.

The polypeptide is Putative methyltransferase ECU09_1500 (Encephalitozoon cuniculi (strain GB-M1) (Microsporidian parasite)).